The primary structure comprises 1135 residues: DNA-directed RNA polymerase I subunit RPA2 (1135 aa).

The interval 1 to 26 (MDVDGRWRNLPSGPSLKHLTDPSYGI) is disordered. Residue Arg-180 coordinates RNA. Residues 194–208 (VRPKWKSRGLGYTQF) are loop B. The loop A stretch occupies residues 236 to 247 (LNFIYRKELFFL). Residue Asp-367 coordinates RNA. Fork loop stretches follow at residues 439-453 (LRSKTGLGFLQDSGL) and 474-489 (RGAAFAKMRTTTVRRL). Asp-755 provides a ligand contact to Mg(2+). Lys-890 contributes to the RNA binding site. Lys-1020 and Arg-1036 together coordinate DNA. A Phosphoserine modification is found at Ser-1051. Zn(2+)-binding residues include Cys-1070, Cys-1073, Cys-1098, and Cys-1101. A C4-type zinc finger spans residues 1070–1101 (CVECGSLLSPLLEKPPPSWSAMRNRKYNCTVC).

This sequence belongs to the RNA polymerase beta chain family. Component of the RNA polymerase I (Pol I) complex consisting of 13 subunits: a ten-subunit catalytic core composed of POLR1A/RPA1, POLR1B/RPA2, POLR1C/RPAC1, POLR1D/RPAC2, POLR1H/RPA12, POLR2E/RPABC1, POLR2F/RPABC2, POLR2H/RPABC3, POLR2K/RPABC4 and POLR2L/RPABC5; a mobile stalk subunit POLR1F/RPA43 protruding from the core and additional subunits homologous to general transcription factors POLR1E/RPA49 and POLR1G/RPA34. Part of Pol I pre-initiation complex (PIC), in which Pol I core assembles with RRN3 and promoter-bound UTBF and SL1/TIF-IB complex. Mg(2+) serves as cofactor.

Its subcellular location is the nucleus. It localises to the nucleolus. The protein resides in the chromosome. The enzyme catalyses RNA(n) + a ribonucleoside 5'-triphosphate = RNA(n+1) + diphosphate. Functionally, catalytic core component of RNA polymerase I (Pol I), a DNA-dependent RNA polymerase which synthesizes ribosomal RNA precursors using the four ribonucleoside triphosphates as substrates. Transcribes 47S pre-rRNAs from multicopy rRNA gene clusters, giving rise to 5.8S, 18S and 28S ribosomal RNAs. Pol I-mediated transcription cycle proceeds through transcription initiation, transcription elongation and transcription termination stages. During transcription initiation, Pol I pre-initiation complex (PIC) is recruited by the selectivity factor 1 (SL1/TIF-IB) complex bound to the core promoter that precedes an rDNA repeat unit. The PIC assembly bends the promoter favoring the formation of the transcription bubble and promoter escape. Once the polymerase has escaped from the promoter it enters the elongation phase during which RNA is actively polymerized, based on complementarity with the template DNA strand. Highly processive, assembles in structures referred to as 'Miller trees' where many elongating Pol I complexes queue and transcribe the same rDNA coding regions. At terminator sequences downstream of the rDNA gene, PTRF interacts with Pol I and halts Pol I transcription leading to the release of the RNA transcript and polymerase from the DNA. Forms Pol I active center together with the largest subunit POLR1A/RPA1. Appends one nucleotide at a time to the 3' end of the nascent RNA, with POLR1A/RPA1 contributing a Mg(2+)-coordinating DxDGD motif, and POLR1B/RPA2 participating in the coordination of a second Mg(2+) ion and providing lysine residues believed to facilitate Watson-Crick base pairing between the incoming nucleotide and the template base. Typically, Mg(2+) ions direct a 5' nucleoside triphosphate to form a phosphodiester bond with the 3' hydroxyl of the preceding nucleotide of the nascent RNA, with the elimination of pyrophosphate. Has proofreading activity: Pauses and backtracks to allow the cleavage of a missincorporated nucleotide via POLR1H/RPA12. High Pol I processivity is associated with decreased transcription fidelity. This Mus musculus (Mouse) protein is DNA-directed RNA polymerase I subunit RPA2.